Reading from the N-terminus, the 323-residue chain is DNA-directed RNA polymerase subunit alpha (323 aa).

The interval 1-225 (MLDIAMPKIE…QYSQTIADFN (225 aa)) is alpha N-terminal domain (alpha-NTD). The alpha C-terminal domain (alpha-CTD) stretch occupies residues 243–323 (PADIYDTPIE…TNSSPAGIES (81 aa)).

It belongs to the RNA polymerase alpha chain family. In terms of assembly, homodimer. The RNAP catalytic core consists of 2 alpha, 1 beta, 1 beta' and 1 omega subunit. When a sigma factor is associated with the core the holoenzyme is formed, which can initiate transcription.

The enzyme catalyses RNA(n) + a ribonucleoside 5'-triphosphate = RNA(n+1) + diphosphate. DNA-dependent RNA polymerase catalyzes the transcription of DNA into RNA using the four ribonucleoside triphosphates as substrates. In Roseiflexus castenholzii (strain DSM 13941 / HLO8), this protein is DNA-directed RNA polymerase subunit alpha.